The following is a 412-amino-acid chain: Poly-beta-1,6-N-acetyl-D-glucosamine synthase (412 aa).

Transmembrane regions (helical) follow at residues 7 to 28 (LLFY…YFFI), 298 to 320 (IASI…TANI), 332 to 354 (IFFF…ALFI), and 364 to 386 (VGLI…VVIM).

This sequence belongs to the glycosyltransferase 2 family.

Its subcellular location is the cell membrane. Functionally, N-acetylglucosaminyltransferase that catalyzes the polymerization of single monomer units of UDP-N-acetylglucosamine to produce the linear homomer poly-beta-1,6-N-acetyl-D-glucosamine (PNAG, also referred to as PIA), a biofilm adhesin polysaccharide. Requires IcaD for full activity. The chain is Poly-beta-1,6-N-acetyl-D-glucosamine synthase (icaA) from Staphylococcus epidermidis (strain ATCC 35984 / DSM 28319 / BCRC 17069 / CCUG 31568 / BM 3577 / RP62A).